The chain runs to 274 residues: Diaminopimelate epimerase (274 aa).

Residues Asn11, Gln44, and Asn64 each coordinate substrate. Catalysis depends on Cys73, which acts as the Proton donor. Substrate contacts are provided by residues 74 to 75 (GN), Asn157, Asn190, and 208 to 209 (ER). Cys217 (proton acceptor) is an active-site residue. 218–219 (GS) provides a ligand contact to substrate.

The protein belongs to the diaminopimelate epimerase family. Homodimer.

The protein localises to the cytoplasm. It catalyses the reaction (2S,6S)-2,6-diaminopimelate = meso-2,6-diaminopimelate. The protein operates within amino-acid biosynthesis; L-lysine biosynthesis via DAP pathway; DL-2,6-diaminopimelate from LL-2,6-diaminopimelate: step 1/1. Functionally, catalyzes the stereoinversion of LL-2,6-diaminopimelate (L,L-DAP) to meso-diaminopimelate (meso-DAP), a precursor of L-lysine and an essential component of the bacterial peptidoglycan. The sequence is that of Diaminopimelate epimerase from Cronobacter sakazakii (strain ATCC BAA-894) (Enterobacter sakazakii).